We begin with the raw amino-acid sequence, 622 residues long: SLAIN motif-containing protein-like (622 aa).

Positions 34–60 (DLKEVQKLHELVKRLEIQNQQLKIKRN) form a coiled coil. Disordered regions lie at residues 404 to 441 (HRYSPSPLSSPRCQSPSAAESRATTSRIRPPRRSIQNH) and 473 to 622 (VRSS…DGCY). Positions 405–415 (RYSPSPLSSPR) are enriched in low complexity. Composition is skewed to polar residues over residues 416–430 (CQSPSAAESRATTSR), 484–502 (QGPSSRLTRMQQPSTSTPP), 525–591 (VSTS…STVP), and 599–611 (SRRSLSSAKMNST).

Belongs to the SLAIN motif-containing family.

This is SLAIN motif-containing protein-like from Xenopus tropicalis (Western clawed frog).